We begin with the raw amino-acid sequence, 867 residues long: Ent-copalyl diphosphate synthase 1, chloroplastic (867 aa).

The N-terminal 35 residues, methionine 1–arginine 35, are a transit peptide targeting the chloroplast. A disordered region spans residues methionine 1 to glutamine 134. A compositionally biased stretch (basic and acidic residues) spans arginine 51–aspartate 64. The segment covering alanine 74–serine 89 has biased composition (low complexity). Residues isoleucine 99 to glutamine 121 show a composition bias toward basic and acidic residues. Residues glutamate 124–leucine 133 show a composition bias toward acidic residues. Lysine 286 contacts substrate. Residues glutamate 418 to aspartate 421 carry the DXDD motif motif. Lysine 504 is a substrate binding site.

This sequence belongs to the terpene synthase family. Mg(2+) is required as a cofactor.

The protein localises to the plastid. It localises to the chloroplast. It catalyses the reaction (2E,6E,10E)-geranylgeranyl diphosphate = ent-copalyl diphosphate. It functions in the pathway plant hormone biosynthesis; gibberellin biosynthesis. Its function is as follows. Catalyzes the conversion of geranylgeranyl diphosphate to the gibberellin precursor ent-copalyl diphosphate. This Oryza sativa subsp. japonica (Rice) protein is Ent-copalyl diphosphate synthase 1, chloroplastic (CPS1).